The chain runs to 653 residues: Dystrotelin (653 aa).

The ZZ-type zinc finger occupies threonine 223–serine 279. Residues cysteine 228, cysteine 231, cysteine 243, cysteine 246, cysteine 252, cysteine 255, histidine 265, and histidine 269 each coordinate Zn(2+). Residues arginine 384–threonine 411 are a coiled coil.

In terms of tissue distribution, strongly expressed in the nervous and muscular tissues.

It localises to the cell membrane. The polypeptide is Dystrotelin (Dytn) (Mus musculus (Mouse)).